Here is a 211-residue protein sequence, read N- to C-terminus: Endonuclease V (211 aa).

The Mg(2+) site is built by Asp31 and Glu95. Residues 182 to 211 are disordered; that stretch reads IYEVKNTPSPNRSRKKRGNRGKDNNNSQGN.

This sequence belongs to the endonuclease V family. The cofactor is Mg(2+).

It is found in the cytoplasm. It catalyses the reaction Endonucleolytic cleavage at apurinic or apyrimidinic sites to products with a 5'-phosphate.. Its function is as follows. DNA repair enzyme involved in the repair of deaminated bases. Selectively cleaves double-stranded DNA at the second phosphodiester bond 3' to a deoxyinosine leaving behind the intact lesion on the nicked DNA. The protein is Endonuclease V of Pyrococcus horikoshii (strain ATCC 700860 / DSM 12428 / JCM 9974 / NBRC 100139 / OT-3).